Consider the following 875-residue polypeptide: Protein translocase subunit SecA (875 aa).

ATP is bound by residues Q87, 105–109 (GEGKT), and D512. The Zn(2+) site is built by C860, C862, C871, and H872.

This sequence belongs to the SecA family. As to quaternary structure, monomer and homodimer. Part of the essential Sec protein translocation apparatus which comprises SecA, SecYEG and auxiliary proteins SecDF-YajC and YidC. Requires Zn(2+) as cofactor.

The protein resides in the cell inner membrane. Its subcellular location is the cytoplasm. It catalyses the reaction ATP + H2O + cellular proteinSide 1 = ADP + phosphate + cellular proteinSide 2.. Its function is as follows. Part of the Sec protein translocase complex. Interacts with the SecYEG preprotein conducting channel. Has a central role in coupling the hydrolysis of ATP to the transfer of proteins into and across the cell membrane, serving both as a receptor for the preprotein-SecB complex and as an ATP-driven molecular motor driving the stepwise translocation of polypeptide chains across the membrane. The sequence is that of Protein translocase subunit SecA from Buchnera aphidicola subsp. Acyrthosiphon pisum (strain APS) (Acyrthosiphon pisum symbiotic bacterium).